The chain runs to 519 residues: Glucose-1-phosphate adenylyltransferase large subunit 2, chloroplastic/amyloplastic (519 aa).

The protein belongs to the bacterial/plant glucose-1-phosphate adenylyltransferase family. Heterotetramer. In terms of tissue distribution, leaves and tubers.

It is found in the plastid. Its subcellular location is the chloroplast. The protein localises to the amyloplast. The enzyme catalyses alpha-D-glucose 1-phosphate + ATP + H(+) = ADP-alpha-D-glucose + diphosphate. It functions in the pathway glycan biosynthesis; starch biosynthesis. Its activity is regulated as follows. Activated by 3'phosphoglycerate, inhibited by orthophosphate. Allosteric regulation. Its function is as follows. This protein plays a role in synthesis of starch. It catalyzes the synthesis of the activated glycosyl donor, ADP-glucose from Glc-1-P and ATP. This Solanum tuberosum (Potato) protein is Glucose-1-phosphate adenylyltransferase large subunit 2, chloroplastic/amyloplastic (AGPS2).